The primary structure comprises 259 residues: Protein TILLER ANGLE CONTROL 1 (259 aa).

The IGT motif signature appears at 56 to 62 (GILAIGT). Disordered stretches follow at residues 96-123 (EEKA…AKMH), 206-226 (SCME…PLKA), and 239-259 (GKKI…PVTA). Low complexity predominate over residues 109–119 (APSEPASALEP).

This sequence belongs to the TAC family. As to expression, expressed in the basal part of seedlings.

Involved in the regulation of tiller growth angle. Promotes horizontal shoot growth. TAC1 and LAZY1 play opposite functions in the regulation of tiller growth angle. The polypeptide is Protein TILLER ANGLE CONTROL 1 (Oryza sativa subsp. indica (Rice)).